We begin with the raw amino-acid sequence, 253 residues long: uncharacterized protein (253 aa).

2 consecutive EamA domains span residues 1 to 97 (MFFM…IYSL) and 116 to 237 (FFWA…ISRL). 8 helical membrane passes run 2–22 (FFMA…AKQL), 28–48 (IFLL…GLLY), 53–73 (ESAV…TLIL), 80–100 (TEVI…LNLG), 101–121 (IYFS…WALF), 138–158 (AVQL…QFYF), 162–182 (INFL…SFYL), and 214–234 (GVNV…GILI).

It belongs to the EamA transporter family.

The protein resides in the cell membrane. This is an uncharacterized protein from Acidianus ambivalens (Desulfurolobus ambivalens).